A 262-amino-acid chain; its full sequence is Catechol O-methyltransferase domain-containing protein 1 (262 aa).

Residues 12–32 (AALALGSAALGAAFATGLLLG) form a helical; Signal-anchor for type II membrane protein membrane-spanning segment. S-adenosyl-L-methionine is bound by residues D108, 110–111 (GT), S116, E134, V135, A163, D185, D187, and Y194.

Belongs to the class I-like SAM-binding methyltransferase superfamily. Cation-dependent O-methyltransferase family. Homodimer.

It localises to the membrane. Functionally, putative O-methyltransferase. This Mus musculus (Mouse) protein is Catechol O-methyltransferase domain-containing protein 1 (Comtd1).